The primary structure comprises 970 residues: uncharacterized protein (970 aa).

Residues 12–32 traverse the membrane as a helical segment; it reads VIFFSVFFVIFFLFIESSVGF.

This sequence to E.coli YtfN.

The protein localises to the membrane. This is an uncharacterized protein from Buchnera aphidicola subsp. Acyrthosiphon pisum (strain APS) (Acyrthosiphon pisum symbiotic bacterium).